The sequence spans 457 residues: Argininosuccinate lyase (457 aa).

This sequence belongs to the lyase 1 family. Argininosuccinate lyase subfamily.

The protein resides in the cytoplasm. It catalyses the reaction 2-(N(omega)-L-arginino)succinate = fumarate + L-arginine. It participates in amino-acid biosynthesis; L-arginine biosynthesis; L-arginine from L-ornithine and carbamoyl phosphate: step 3/3. The protein is Argininosuccinate lyase of Escherichia coli O127:H6 (strain E2348/69 / EPEC).